We begin with the raw amino-acid sequence, 717 residues long: METVDSTRAFVKNVKRLIVKVGTAVVTRADGRLALGRLGALCEQLQELNSQGYEVILVTSGAVGVGRQRLRYRKLLNSSFLDLQKPQTELDGKACAAVGQNGLMALYDSLFSQLDVTSAQLLVTDNDFRDPDFRRQLNDTVNSLLSLKVIPIFNENDAISTRRAPYEDSSGIFWDNDSLAALLALELKADLLVLLSDVDGLYSGPPRDPDSKLIYTYIKEIHERVITFGDKSRVGRGGMTAKVKAAMYAAYAGIPVVITSGFATDNIIKVLHGERIGTLFHCDANKWASIGETDAREMAVAARACSRRLQALSSQERSKILQDIADALEANEKAILAENEADVVAAQQAGYEKSLISRLALNPGKISSLANSVRVLSNMDEPLGHTLKRTEIADGFILEKSSSPLGVVLIIFESRPDALVQIASLAVRSGNGLMLKGGKEAKRSNAILHKVITSAIPVSVGERLIGLVTSREEIPELLKLDDVIDLVIPRGSNKLVSQIKASTKIPVLGHADGICHVYVDKSADMDMAKRITVDAKIDYPAACNAMETLLVHKDLAQNGGLNDLIVELQTKGVSLYGGPKASSLLMIPEARTFRHEYSSLACTVEVVEDVYAAIDHIHQHGSAHTDSIITEDQEVAEVFLRQVDSAAVFHNASTRFSDGFRFGLGAEVGISTGRIHARGPVGVEGLLTTKWLARGSGQIVDGDKSIVYSHKDLTQQG.

The segment at 1–296 (METVDSTRAF…WASIGETDAR (296 aa)) is glutamate 5-kinase. Positions 60, 157, and 176 each coordinate substrate. Residues 196-197 (SD) and 236-242 (RGGMTAK) contribute to the ATP site. A gamma-glutamyl phosphate reductase region spans residues 297 to 717 (EMAVAARACS…YSHKDLTQQG (421 aa)).

It in the N-terminal section; belongs to the glutamate 5-kinase family. This sequence in the C-terminal section; belongs to the gamma-glutamyl phosphate reductase family. As to expression, expressed at high levels in leaves and is inducible in roots subjected to salt stress.

The catalysed reaction is L-glutamate + ATP = L-glutamyl 5-phosphate + ADP. It catalyses the reaction L-glutamate 5-semialdehyde + phosphate + NADP(+) = L-glutamyl 5-phosphate + NADPH + H(+). Its pathway is amino-acid biosynthesis; L-proline biosynthesis; L-glutamate 5-semialdehyde from L-glutamate: step 1/2. It functions in the pathway amino-acid biosynthesis; L-proline biosynthesis; L-glutamate 5-semialdehyde from L-glutamate: step 2/2. With respect to regulation, feedback regulated by proline. P5CS plays a key role in proline biosynthesis, leading to osmoregulation in plants. This chain is Delta-1-pyrroline-5-carboxylate synthase (PRO2), found in Solanum lycopersicum (Tomato).